The sequence spans 160 residues: Large ribosomal subunit protein uL16 (160 aa).

The disordered stretch occupies residues Lys138–Gln160.

Belongs to the universal ribosomal protein uL16 family. As to quaternary structure, part of the 50S ribosomal subunit.

Binds 23S rRNA and is also seen to make contacts with the A and possibly P site tRNAs. The chain is Large ribosomal subunit protein uL16 from Prochlorococcus marinus (strain MIT 9215).